A 131-amino-acid polypeptide reads, in one-letter code: Large ribosomal subunit protein bL17 (131 aa).

The protein belongs to the bacterial ribosomal protein bL17 family. In terms of assembly, part of the 50S ribosomal subunit. Contacts protein L32.

The protein is Large ribosomal subunit protein bL17 of Vesicomyosocius okutanii subsp. Calyptogena okutanii (strain HA).